Reading from the N-terminus, the 176-residue chain is NAD(P)H-quinone oxidoreductase subunit J (176 aa).

Belongs to the complex I 30 kDa subunit family. As to quaternary structure, NDH-1 can be composed of about 15 different subunits; different subcomplexes with different compositions have been identified which probably have different functions.

It is found in the cellular thylakoid membrane. It catalyses the reaction a plastoquinone + NADH + (n+1) H(+)(in) = a plastoquinol + NAD(+) + n H(+)(out). It carries out the reaction a plastoquinone + NADPH + (n+1) H(+)(in) = a plastoquinol + NADP(+) + n H(+)(out). Functionally, NDH-1 shuttles electrons from an unknown electron donor, via FMN and iron-sulfur (Fe-S) centers, to quinones in the respiratory and/or the photosynthetic chain. The immediate electron acceptor for the enzyme in this species is believed to be plastoquinone. Couples the redox reaction to proton translocation, and thus conserves the redox energy in a proton gradient. Cyanobacterial NDH-1 also plays a role in inorganic carbon-concentration. The sequence is that of NAD(P)H-quinone oxidoreductase subunit J from Prochlorococcus marinus subsp. pastoris (strain CCMP1986 / NIES-2087 / MED4).